The primary structure comprises 428 residues: C4-dicarboxylate transport protein (428 aa).

8 helical membrane passes run 8–28 (VLYVQVIFAIVVGVILGHYYP), 44–64 (LIKMVIGPIIFCTVVTGIAGM), 78–98 (LLYFEIVSTCALVLGLAATHI), 148–168 (GEILQILLIALLFGSVLAHLG), 184–204 (VLFGIVHIVTKLAPIGAFGAM), 222–242 (LIGTFYLTSVVFVLVVLGAIA), 307–327 (IYMTMAVLFIAQATNIELTWM), and 355–375 (AATLAVVPTIPLSGMVLILGI).

It belongs to the dicarboxylate/amino acid:cation symporter (DAACS) (TC 2.A.23) family.

It is found in the cell inner membrane. Its function is as follows. Responsible for the transport of dicarboxylates such as succinate, fumarate, and malate from the periplasm across the membrane. The sequence is that of C4-dicarboxylate transport protein from Burkholderia mallei (strain ATCC 23344).